The primary structure comprises 505 residues: Trans-cinnamate 4-monooxygenase (505 aa).

A helical membrane pass occupies residues 3–23 (LLLVEKTLLALFAAIIASIFI). (E)-cinnamate contacts are provided by residues 213–218 (RSRLAQ) and alanine 306. Heme is bound at residue cysteine 447.

The protein belongs to the cytochrome P450 family. It depends on heme as a cofactor.

It is found in the membrane. The enzyme catalyses (E)-cinnamate + reduced [NADPH--hemoprotein reductase] + O2 = (E)-4-coumarate + oxidized [NADPH--hemoprotein reductase] + H2O + H(+). The protein operates within phenylpropanoid metabolism; trans-4-coumarate biosynthesis; trans-4-coumarate from trans-cinnamate: step 1/1. Its function is as follows. Catalyzes the first oxidative step of the phenylpropanoid pathway in higher plants by transforming trans-cinnamate into p-coumarate. The compounds formed by this pathway are essential components for lignification, pollination, and defense against ultraviolet light, predators and pathogens. This is Trans-cinnamate 4-monooxygenase (CYP73A12) from Zinnia elegans (Garden zinnia).